Here is a 152-residue protein sequence, read N- to C-terminus: 6,7-dimethyl-8-ribityllumazine synthase (152 aa).

Residues F18, 49-51 (ALE), and 75-77 (CVI) contribute to the 5-amino-6-(D-ribitylamino)uracil site. Residue 80–81 (ET) participates in (2S)-2-hydroxy-3-oxobutyl phosphate binding. The Proton donor role is filled by H83. N108 contributes to the 5-amino-6-(D-ribitylamino)uracil binding site. (2S)-2-hydroxy-3-oxobutyl phosphate is bound at residue R122.

This sequence belongs to the DMRL synthase family.

It catalyses the reaction (2S)-2-hydroxy-3-oxobutyl phosphate + 5-amino-6-(D-ribitylamino)uracil = 6,7-dimethyl-8-(1-D-ribityl)lumazine + phosphate + 2 H2O + H(+). It functions in the pathway cofactor biosynthesis; riboflavin biosynthesis; riboflavin from 2-hydroxy-3-oxobutyl phosphate and 5-amino-6-(D-ribitylamino)uracil: step 1/2. Functionally, catalyzes the formation of 6,7-dimethyl-8-ribityllumazine by condensation of 5-amino-6-(D-ribitylamino)uracil with 3,4-dihydroxy-2-butanone 4-phosphate. This is the penultimate step in the biosynthesis of riboflavin. This is 6,7-dimethyl-8-ribityllumazine synthase from Bartonella bacilliformis (strain ATCC 35685 / KC583 / Herrer 020/F12,63).